The primary structure comprises 467 residues: MRNVELIFIPTPTVGHLVPFLEFARRLIEQDDRIRITILLMKLQGQSHLDTYVKSIASSQPFVRFIDVPELEEKPTLGSTQSVEAYVYDVIERNIPLVRNIVMDILTSLALDGVKVKGLVVDFFCLPMIDVAKDISLPFYVFLTTNSGFLAMMQYLADRHSRDTSVFVRNSEEMLSIPGFVNPVPANVLPSALFVEDGYDAYVKLAILFTKANGILVNSSFDIEPYSVNHFLQEQNYPSVYAVGPIFDLKAQPHPEQDLTRRDELMKWLDDQPEASVVFLCFGSMARLRGSLVKEIAHGLELCQYRFLWSLRKEEVTKDDLPEGFLDRVDGRGMICGWSPQVEILAHKAVGGFVSHCGWNSIVESLWFGVPIVTWPMYAEQQLNAFLMVKELKLAVELKLDYRVHSDEIVNANEIETAIRYVMDTDNNVVRKRVMDISQMIQRATKNGGSSFAAIEKFIYDVIGIKP.

H16 acts as the Proton acceptor in catalysis. H16 provides a ligand contact to an anthocyanidin. D122 serves as the catalytic Charge relay. 7 residues coordinate UDP-alpha-D-glucose: T144, Q341, H356, W359, N360, S361, and E364. An an anthocyanidin-binding site is contributed by A379. E380 and Q381 together coordinate UDP-alpha-D-glucose.

Belongs to the UDP-glycosyltransferase family.

The catalysed reaction is a flavonol + UDP-alpha-D-glucose = a flavonol 3-O-beta-D-glucoside + UDP + H(+). In terms of biological role, possesses quercetin 3-O-glucosyltransferase activity in vitro. The chain is UDP-glycosyltransferase 71D1 (UGT71D1) from Arabidopsis thaliana (Mouse-ear cress).